Reading from the N-terminus, the 316-residue chain is Pantothenate kinase (316 aa).

95 to 102 (GSVSVGKS) is an ATP binding site.

The protein belongs to the prokaryotic pantothenate kinase family.

The protein resides in the cytoplasm. It carries out the reaction (R)-pantothenate + ATP = (R)-4'-phosphopantothenate + ADP + H(+). It functions in the pathway cofactor biosynthesis; coenzyme A biosynthesis; CoA from (R)-pantothenate: step 1/5. The polypeptide is Pantothenate kinase (Actinobacillus pleuropneumoniae serotype 7 (strain AP76)).